The chain runs to 791 residues: Ribosome biogenesis protein ERB1 (791 aa).

Over residues 1-12 (MARKNSSLNGSE) the composition is skewed to polar residues. Disordered regions lie at residues 1-60 (MARK…DDSD) and 68-87 (AEEE…SEEG). 2 stretches are compositionally biased toward acidic residues: residues 25-60 (ESEL…DDSD) and 69-87 (EEEN…SEEG). A required for interaction with NOP7 region spans residues 254–372 (RFVPSKHEAK…LRKVPGYSES (119 aa)). The interval 372 to 408 (SVRERFERSLDLYLAPRVRKNKLNIDPESLIPELPST) is required for interaction with YTM1. WD repeat units follow at residues 424–463 (GHKG…EVYQ), 472–512 (NNDD…FEIE), 576–618 (TCRK…TQSP), 621–659 (KSKG…LIKK), 662–701 (PGAR…TPYK), 705–744 (YHEK…DLMK), and 760–791 (VNSL…LWTT).

Belongs to the WD repeat BOP1/ERB1 family. As to quaternary structure, component of the NOP7 complex, composed of ERB1, NOP7 and YTM1. The complex is held together by ERB1, which interacts with NOP7 via its N-terminal domain and with YTM1 via a high-affinity interaction between the seven-bladed beta-propeller domains of the 2 proteins. The NOP7 complex associates with the 66S pre-ribosome.

It localises to the nucleus. It is found in the nucleolus. The protein localises to the nucleoplasm. Functionally, component of the NOP7 complex, which is required for maturation of the 25S and 5.8S ribosomal RNAs and formation of the 60S ribosome. The protein is Ribosome biogenesis protein ERB1 of Kluyveromyces lactis (strain ATCC 8585 / CBS 2359 / DSM 70799 / NBRC 1267 / NRRL Y-1140 / WM37) (Yeast).